The following is a 737-amino-acid chain: 1,4-alpha-glucan branching enzyme GlgB (737 aa).

Aspartate 399 acts as the Nucleophile in catalysis. The active-site Proton donor is glutamate 452.

This sequence belongs to the glycosyl hydrolase 13 family. GlgB subfamily. As to quaternary structure, monomer.

It catalyses the reaction Transfers a segment of a (1-&gt;4)-alpha-D-glucan chain to a primary hydroxy group in a similar glucan chain.. The protein operates within glycan biosynthesis; glycogen biosynthesis. Catalyzes the formation of the alpha-1,6-glucosidic linkages in glycogen by scission of a 1,4-alpha-linked oligosaccharide from growing alpha-1,4-glucan chains and the subsequent attachment of the oligosaccharide to the alpha-1,6 position. The chain is 1,4-alpha-glucan branching enzyme GlgB from Chlamydia muridarum (strain MoPn / Nigg).